Consider the following 544-residue polypeptide: Chaperonin GroEL (544 aa).

ATP contacts are provided by residues 29 to 32, 86 to 90, Gly-413, 476 to 478, and Asp-492; these read TLGP, DGTTT, and NAA.

This sequence belongs to the chaperonin (HSP60) family. In terms of assembly, forms a cylinder of 14 subunits composed of two heptameric rings stacked back-to-back. Interacts with the co-chaperonin GroES.

The protein resides in the cytoplasm. It catalyses the reaction ATP + H2O + a folded polypeptide = ADP + phosphate + an unfolded polypeptide.. Its function is as follows. Together with its co-chaperonin GroES, plays an essential role in assisting protein folding. The GroEL-GroES system forms a nano-cage that allows encapsulation of the non-native substrate proteins and provides a physical environment optimized to promote and accelerate protein folding. The polypeptide is Chaperonin GroEL (Bacillus anthracis (strain A0248)).